Reading from the N-terminus, the 602-residue chain is MLPRVTKLNSRLLSLALLGIQIARGAITYQHPDDLPSGVDYDFIVAGGGTAGLVVASRLSENSNWKVLVIEAGPSNKDAFVTRVPGLASTLGAGSPIDWNYTTIPQDGLDGRSLDYPRAKILGGCSTHNGMVYTRGSKDDWNSWAGIIGDQGLGWDSILPAIKKAEKFTQDFTDQSVKGHIDPSVHGFDGKLSVSAAYSNISFNDLLFETTKELNAEFPFKLDMNDGKPIGLGWTQYTIDNHAERSSSATSYLESTGDNVHVLVNTLVTRVLSASGNGTDFRKVEFAVDANSPKKQLEAKKEVIVAGGVIASPQILMNSGIGERKVLQAVGIDTLIDNPSVGKNLSDQGATSVMFDTTLPSTDFDVDAALTEWTNSHTGPLARGARLNHLTFVRLPDDKLNGQDPSSGKNSPHIEFQFAQITPQVPTLGVPKQAPLPAANSYRLLLQLAVVNLYSISRGSISLSDNNPFTYPLIDLNMFKEDIDIAILREGIRSAGRMFSSKAFKNSVNKFVYPPADATSDEDLDAFLRSSTFSYVHGVGTLSMSPKGASWGVVNPDFKVKGTSGLRVVDASVIPHAPAAHTQLPVYAFAEYASALIAKSYN.

The N-terminal stretch at 1–25 (MLPRVTKLNSRLLSLALLGIQIARG) is a signal peptide. A glycan (N-linked (GlcNAc...) asparagine) is linked at asparagine 100. Histidine 128 bears the Tele-8alpha-FAD histidine mark. N-linked (GlcNAc...) asparagine glycans are attached at residues asparagine 200, asparagine 277, and asparagine 344. Catalysis depends on histidine 537, which acts as the Proton acceptor. Residue histidine 581 is part of the active site.

The protein belongs to the GMC oxidoreductase family. In terms of assembly, monomer. It depends on FAD as a cofactor. Post-translationally, N-glycosylated.

It is found in the secreted. It carries out the reaction pyranose + acceptor = pyranos-2-ulose + reduced acceptor.. It catalyses the reaction pyranose + acceptor = pyranos-3-ulose + reduced acceptor.. The catalysed reaction is pyranose + acceptor = pyranos-2,3-diulose + reduced acceptor.. The enzyme catalyses a pyranoside + acceptor = a pyranosid-3-ulose + reduced acceptor.. It carries out the reaction a pyranoside + acceptor = a pyranosid-3,4-diulose + reduced acceptor.. In terms of biological role, catalyzes the single-oxidation or sequential double oxidation reaction of carbohydrates primarily at carbon-2 and/or carbon-3 with the concomitant reduction of the flavin. The enzyme exhibits a broad sugar substrate specificity, oxidizing different aldopyranoses to the corresponding C-1, C-2, C-3 or C-1,2, C-2,3 and C-3,4 (di)dehydro sugars with substrate-specific regioselectivity. Accepts only a narrow range of electron acceptors such as substituted benzoquinones and complexed metal ions and reacts extremely slowly with O(2) as acceptor. May play a role in the natural recycling of plant matter by oxidizing all major monosaccharides in lignocellulose and by reducing quinone compounds or reactive radical species generated during lignin depolymerization. In Leucoagaricus meleagris (Western flat-topped agaric), this protein is Pyranose dehydrogenase 1.